Consider the following 262-residue polypeptide: Shikimate dehydrogenase (NADP(+)) (262 aa).

Shikimate is bound by residues 15–17 (SRS) and Thr-62. The Proton acceptor role is filled by Lys-66. Residue Glu-78 participates in NADP(+) binding. Positions 87 and 102 each coordinate shikimate. NADP(+) contacts are provided by residues 126–130 (GAGGA), 150–155 (NRTQQR), and Met-214. Tyr-216 contacts shikimate. Gly-236 lines the NADP(+) pocket.

It belongs to the shikimate dehydrogenase family. As to quaternary structure, homodimer.

The catalysed reaction is shikimate + NADP(+) = 3-dehydroshikimate + NADPH + H(+). The protein operates within metabolic intermediate biosynthesis; chorismate biosynthesis; chorismate from D-erythrose 4-phosphate and phosphoenolpyruvate: step 4/7. In terms of biological role, involved in the biosynthesis of the chorismate, which leads to the biosynthesis of aromatic amino acids. Catalyzes the reversible NADPH linked reduction of 3-dehydroshikimate (DHSA) to yield shikimate (SA). This Acinetobacter baylyi (strain ATCC 33305 / BD413 / ADP1) protein is Shikimate dehydrogenase (NADP(+)).